A 335-amino-acid chain; its full sequence is Large ribosomal subunit protein uL3 (335 aa).

Disordered stretches follow at residues 1 to 35 (MPQP…ADDG), 234 to 256 (IGNL…GQTG), and 312 to 335 (AVRP…SNQG). Over residues 244-256 (RVRSTVPQQGQTG) the composition is skewed to polar residues.

The protein belongs to the universal ribosomal protein uL3 family. Part of the 50S ribosomal subunit. Forms a cluster with proteins L14 and L24e.

Its function is as follows. One of the primary rRNA binding proteins, it binds directly near the 3'-end of the 23S rRNA, where it nucleates assembly of the 50S subunit. This chain is Large ribosomal subunit protein uL3, found in Halobacterium salinarum (strain ATCC 29341 / DSM 671 / R1).